Consider the following 936-residue polypeptide: Isoleucine--tRNA ligase (936 aa).

Residues 58-68 carry the 'HIGH' region motif; it reads PYANGNIHIGH. Residue E560 participates in L-isoleucyl-5'-AMP binding. Positions 601–605 match the 'KMSKS' region motif; that stretch reads KMSKS. Residue K604 participates in ATP binding. C899, C902, C919, and C922 together coordinate Zn(2+).

This sequence belongs to the class-I aminoacyl-tRNA synthetase family. IleS type 1 subfamily. In terms of assembly, monomer. The cofactor is Zn(2+).

The protein resides in the cytoplasm. The enzyme catalyses tRNA(Ile) + L-isoleucine + ATP = L-isoleucyl-tRNA(Ile) + AMP + diphosphate. Catalyzes the attachment of isoleucine to tRNA(Ile). As IleRS can inadvertently accommodate and process structurally similar amino acids such as valine, to avoid such errors it has two additional distinct tRNA(Ile)-dependent editing activities. One activity is designated as 'pretransfer' editing and involves the hydrolysis of activated Val-AMP. The other activity is designated 'posttransfer' editing and involves deacylation of mischarged Val-tRNA(Ile). This is Isoleucine--tRNA ligase from Proteus mirabilis (strain HI4320).